The following is a 579-amino-acid chain: Type II restriction enzyme FokI (579 aa).

Active-site residues include aspartate 450, aspartate 467, and lysine 469.

As to quaternary structure, monomer, in which form it can cleave DNA. Homodimer when bound to DNA. Mg(2+) is required as a cofactor.

It carries out the reaction Endonucleolytic cleavage of DNA to give specific double-stranded fragments with terminal 5'-phosphates.. Its function is as follows. An S subtype restriction enzyme that recognizes the asymmetric double-stranded sequence 5'-GGATG-3' and cleaves respectively 14 bases after G-1 (top strand) and 13 bases before C-1 (bottom strand). The protein is Type II restriction enzyme FokI of Planomicrobium okeanokoites (Planococcus okeanokoites).